A 132-amino-acid chain; its full sequence is Nucleoid-associated protein EspR (132 aa).

The H-T-H motif DNA-binding region spans 38–50; it reads ITMSAPYLSQLRS.

Homodimer. Binds DNA as a dimer of dimers.

Its subcellular location is the cytoplasm. It localises to the nucleoid. In terms of biological role, virulence regulator that has both architectural and regulatory roles. Impacts cell wall functions and pathogenesis through regulation of multiple genes. The sequence is that of Nucleoid-associated protein EspR from Mycobacterium tuberculosis (strain CDC 1551 / Oshkosh).